The following is a 1298-amino-acid chain: Phosphoribosylformylglycinamidine synthase (1298 aa).

Residues phenylalanine 303 to lysine 327 are disordered. ATP-binding positions include glycine 305–aspartate 316, threonine 384–tyrosine 386, and alanine 676. Residues aspartate 677, glutamate 716, asparagine 720, and aspartate 884 each coordinate Mg(2+). Serine 886 is a binding site for ATP. A Glutamine amidotransferase type-1 domain is found at valine 1045–asparagine 1298. The active-site Nucleophile is the cysteine 1138. Residues histidine 1263 and glutamate 1265 contribute to the active site.

This sequence in the N-terminal section; belongs to the FGAMS family. Monomer.

The protein localises to the cytoplasm. The catalysed reaction is N(2)-formyl-N(1)-(5-phospho-beta-D-ribosyl)glycinamide + L-glutamine + ATP + H2O = 2-formamido-N(1)-(5-O-phospho-beta-D-ribosyl)acetamidine + L-glutamate + ADP + phosphate + H(+). Its pathway is purine metabolism; IMP biosynthesis via de novo pathway; 5-amino-1-(5-phospho-D-ribosyl)imidazole from N(2)-formyl-N(1)-(5-phospho-D-ribosyl)glycinamide: step 1/2. Functionally, phosphoribosylformylglycinamidine synthase involved in the purines biosynthetic pathway. Catalyzes the ATP-dependent conversion of formylglycinamide ribonucleotide (FGAR) and glutamine to yield formylglycinamidine ribonucleotide (FGAM) and glutamate. In Pseudomonas syringae pv. syringae (strain B728a), this protein is Phosphoribosylformylglycinamidine synthase.